Reading from the N-terminus, the 278-residue chain is D-arabinitol 2-dehydrogenase [ribulose-forming] (278 aa).

The NADP(+) site is built by Leu-28 and Asn-49. The active-site Proton donor is Ser-166. NADP(+) contacts are provided by Tyr-181, Lys-185, Ile-214, and Thr-216. Tyr-181 (proton acceptor) is an active-site residue. Catalysis depends on Lys-185, which acts as the Lowers pKa of active site Tyr.

It belongs to the short-chain dehydrogenases/reductases (SDR) family.

The catalysed reaction is D-arabinitol + NAD(+) = D-ribulose + NADH + H(+). Its pathway is carbohydrate metabolism; D-arabinitol metabolism. The protein is D-arabinitol 2-dehydrogenase [ribulose-forming] (ARDH) of Scheffersomyces stipitis (strain ATCC 58785 / CBS 6054 / NBRC 10063 / NRRL Y-11545) (Yeast).